A 326-amino-acid polypeptide reads, in one-letter code: Peroxidase 41 (326 aa).

The signal sequence occupies residues 1–20 (MSSVINVLFVVLVFVPSIYS). N-linked (GlcNAc...) asparagine glycosylation is present at asparagine 25. 4 disulfides stabilise this stretch: cysteine 35/cysteine 116, cysteine 68/cysteine 73, cysteine 122/cysteine 318, and cysteine 201/cysteine 228. Histidine 66 serves as the catalytic Proton acceptor. Ca(2+)-binding residues include aspartate 67, glycine 72, aspartate 74, and serine 76. Proline 164 is a binding site for substrate. N-linked (GlcNAc...) asparagine glycosylation occurs at asparagine 167. Histidine 194 provides a ligand contact to heme b. Threonine 195 is a binding site for Ca(2+). The N-linked (GlcNAc...) asparagine glycan is linked to asparagine 234. Residues aspartate 242, threonine 245, and aspartate 250 each contribute to the Ca(2+) site. Asparagine 286 carries an N-linked (GlcNAc...) asparagine glycan.

It belongs to the peroxidase family. Classical plant (class III) peroxidase subfamily. Heme b is required as a cofactor. The cofactor is Ca(2+).

It localises to the secreted. It carries out the reaction 2 a phenolic donor + H2O2 = 2 a phenolic radical donor + 2 H2O. Its function is as follows. Removal of H(2)O(2), oxidation of toxic reductants, biosynthesis and degradation of lignin, suberization, auxin catabolism, response to environmental stresses such as wounding, pathogen attack and oxidative stress. These functions might be dependent on each isozyme/isoform in each plant tissue. This Arabidopsis thaliana (Mouse-ear cress) protein is Peroxidase 41 (PER41).